The primary structure comprises 171 residues: Orotate phosphoribosyltransferase (171 aa).

5-phospho-alpha-D-ribose 1-diphosphate-binding positions include Arg-85, Lys-86, Arg-88, His-90, and 110-118; that span reads EDVVTTGNS. 2 residues coordinate orotate: Thr-114 and Arg-142.

It belongs to the purine/pyrimidine phosphoribosyltransferase family. PyrE subfamily. In terms of assembly, homodimer. Mg(2+) is required as a cofactor.

The enzyme catalyses orotidine 5'-phosphate + diphosphate = orotate + 5-phospho-alpha-D-ribose 1-diphosphate. It functions in the pathway pyrimidine metabolism; UMP biosynthesis via de novo pathway; UMP from orotate: step 1/2. In terms of biological role, catalyzes the transfer of a ribosyl phosphate group from 5-phosphoribose 1-diphosphate to orotate, leading to the formation of orotidine monophosphate (OMP). The sequence is that of Orotate phosphoribosyltransferase from Thermoplasma acidophilum (strain ATCC 25905 / DSM 1728 / JCM 9062 / NBRC 15155 / AMRC-C165).